The chain runs to 237 residues: Large ribosomal subunit protein uL1 (237 aa).

It belongs to the universal ribosomal protein uL1 family. In terms of assembly, part of the 50S ribosomal subunit.

Its function is as follows. Binds directly to 23S rRNA. The L1 stalk is quite mobile in the ribosome, and is involved in E site tRNA release. In terms of biological role, protein L1 is also a translational repressor protein, it controls the translation of the L11 operon by binding to its mRNA. This chain is Large ribosomal subunit protein uL1, found in Leptothrix cholodnii (strain ATCC 51168 / LMG 8142 / SP-6) (Leptothrix discophora (strain SP-6)).